Consider the following 160-residue polypeptide: Baculoviral IAP repeat-containing protein 5.1-B (160 aa).

Residues 13-83 (QRLQDFRNMY…EGWEPDDDPW (71 aa)) form a BIR repeat. T43 is modified (phosphothreonine; by CDK1). C66, C69, H86, and C93 together coordinate Zn(2+).

The protein belongs to the IAP family. In terms of assembly, component of the CPC at least composed of survivin/birc5, incenp, cdca8/borealin and/or cdca9/dasra-A, and aurkb/aurora-B. Interacts directly with incenp (via N-terminus), and may weakly interact with aurkb (via N-terminus) to stabilize the complex. Interacts with GTP-bound ran in both the S and M phases of the cell cycle. Also found in a complex with ubiquitin-mediated signaling proteins including at least usp9x/xFAM, nploc4/npl4 and ufd1. Ubiquitination is required for centrosome-targeting.

It is found in the cytoplasm. The protein resides in the nucleus. Its subcellular location is the chromosome. It localises to the centromere. The protein localises to the cytoskeleton. It is found in the spindle. Component of the chromosomal passenger complex (CPC), a complex that acts as a key regulator of mitosis. The CPC complex has essential functions at the centromere in ensuring correct chromosome alignment and segregation and is required for chromatin-induced microtubule stabilization and spindle assembly. Stimulates the mitotic kinase activity of aurkb/aurora-B in the CPC. Does not appear to exhibit anti-apoptotic activity. CPC. Does not appear to exhibit anti-apoptotic activity. This Xenopus laevis (African clawed frog) protein is Baculoviral IAP repeat-containing protein 5.1-B (birc5.1-b).